A 96-amino-acid chain; its full sequence is ATP synthase subunit e, mitochondrial (96 aa).

Serine 2 is subject to N-acetylserine.

The protein belongs to the ATPase e subunit family. As to quaternary structure, F-type ATPases have 2 components, CF(1) - the catalytic core - and CF(0) - the membrane proton channel. In yeast, the dimeric form of ATP synthase consists of 17 polypeptides: alpha, beta, gamma, delta, epsilon, 4 (B), 5 (OSCP), 6 (A), 8, 9 (C), d, E (Tim11), f, g, h, i/j and k.

Its subcellular location is the mitochondrion. It is found in the mitochondrion inner membrane. Its function is as follows. Mitochondrial membrane ATP synthase (F(1)F(0) ATP synthase or Complex V) produces ATP from ADP in the presence of a proton gradient across the membrane which is generated by electron transport complexes of the respiratory chain. F-type ATPases consist of two structural domains, F(1) - containing the extramembraneous catalytic core, and F(0) - containing the membrane proton channel, linked together by a central stalk and a peripheral stalk. During catalysis, ATP synthesis in the catalytic domain of F(1) is coupled via a rotary mechanism of the central stalk subunits to proton translocation. Part of the complex F(0) domain. Minor subunit located with subunit a in the membrane. This Saccharomyces cerevisiae (strain ATCC 204508 / S288c) (Baker's yeast) protein is ATP synthase subunit e, mitochondrial (TIM11).